We begin with the raw amino-acid sequence, 168 residues long: Peptide deformylase (168 aa).

Cys92 and His134 together coordinate Fe cation. Residue Glu135 is part of the active site. A Fe cation-binding site is contributed by His138.

The protein belongs to the polypeptide deformylase family. Requires Fe(2+) as cofactor.

It carries out the reaction N-terminal N-formyl-L-methionyl-[peptide] + H2O = N-terminal L-methionyl-[peptide] + formate. Removes the formyl group from the N-terminal Met of newly synthesized proteins. Requires at least a dipeptide for an efficient rate of reaction. N-terminal L-methionine is a prerequisite for activity but the enzyme has broad specificity at other positions. This Hahella chejuensis (strain KCTC 2396) protein is Peptide deformylase.